The following is a 451-amino-acid chain: Tubulin alpha-1 chain (451 aa).

Q11 is a binding site for GTP. K40 carries the N6-acetyllysine modification. Positions 71, 144, 145, 179, 206, and 228 each coordinate GTP. E71 is a Mg(2+) binding site. The active site involves E254.

The protein belongs to the tubulin family. Dimer of alpha and beta chains. A typical microtubule is a hollow water-filled tube with an outer diameter of 25 nm and an inner diameter of 15 nM. Alpha-beta heterodimers associate head-to-tail to form protofilaments running lengthwise along the microtubule wall with the beta-tubulin subunit facing the microtubule plus end conferring a structural polarity. Microtubules usually have 13 protofilaments but different protofilament numbers can be found in some organisms and specialized cells. Mg(2+) serves as cofactor. Undergoes a tyrosination/detyrosination cycle, the cyclic removal and re-addition of a C-terminal tyrosine residue by the enzymes tubulin tyrosine carboxypeptidase (TTCP) and tubulin tyrosine ligase (TTL), respectively. In terms of processing, acetylation of alpha chains at Lys-40 stabilizes microtubules and affects affinity and processivity of microtubule motors. This modification has a role in multiple cellular functions, ranging from cell motility, cell cycle progression or cell differentiation to intracellular trafficking and signaling.

The protein localises to the cytoplasm. It localises to the cytoskeleton. It carries out the reaction GTP + H2O = GDP + phosphate + H(+). Its function is as follows. Tubulin is the major constituent of microtubules, a cylinder consisting of laterally associated linear protofilaments composed of alpha- and beta-tubulin heterodimers. Microtubules grow by the addition of GTP-tubulin dimers to the microtubule end, where a stabilizing cap forms. Below the cap, tubulin dimers are in GDP-bound state, owing to GTPase activity of alpha-tubulin. This Eleusine indica (Goosegrass) protein is Tubulin alpha-1 chain (TUBA1).